Consider the following 155-residue polypeptide: uncharacterized protein (155 aa).

Residues 6–155 (TCVRNARLAD…CDEIAMVKTL (150 aa)) enclose the N-acetyltransferase domain.

It belongs to the acetyltransferase family.

This is an uncharacterized protein from Chlorobaculum tepidum (strain ATCC 49652 / DSM 12025 / NBRC 103806 / TLS) (Chlorobium tepidum).